We begin with the raw amino-acid sequence, 359 residues long: UPF0284 protein MAE_56900 (359 aa).

Belongs to the UPF0284 family.

This Microcystis aeruginosa (strain NIES-843 / IAM M-2473) protein is UPF0284 protein MAE_56900.